The following is a 138-amino-acid chain: uncharacterized protein (138 aa).

This is an uncharacterized protein from Thiocystis violacea.